Here is a 304-residue protein sequence, read N- to C-terminus: Quinolinate synthase (304 aa).

Iminosuccinate contacts are provided by histidine 24 and serine 41. Cysteine 86 contacts [4Fe-4S] cluster. Iminosuccinate contacts are provided by residues 112-114 (YVN) and serine 129. Cysteine 171 lines the [4Fe-4S] cluster pocket. Iminosuccinate-binding positions include 197 to 199 (HPE) and threonine 214. Cysteine 259 contributes to the [4Fe-4S] cluster binding site.

It belongs to the quinolinate synthase family. Type 2 subfamily. Requires [4Fe-4S] cluster as cofactor.

It localises to the cytoplasm. The enzyme catalyses iminosuccinate + dihydroxyacetone phosphate = quinolinate + phosphate + 2 H2O + H(+). The protein operates within cofactor biosynthesis; NAD(+) biosynthesis; quinolinate from iminoaspartate: step 1/1. In terms of biological role, catalyzes the condensation of iminoaspartate with dihydroxyacetone phosphate to form quinolinate. This is Quinolinate synthase from Geotalea uraniireducens (strain Rf4) (Geobacter uraniireducens).